The primary structure comprises 316 residues: UDP-N-acetylenolpyruvoylglucosamine reductase (316 aa).

The FAD-binding PCMH-type domain occupies Val27 to Lys225. Arg190 is a catalytic residue. The active-site Proton donor is the Ser239. Glu309 is a catalytic residue.

It belongs to the MurB family. FAD is required as a cofactor.

Its subcellular location is the cytoplasm. It catalyses the reaction UDP-N-acetyl-alpha-D-muramate + NADP(+) = UDP-N-acetyl-3-O-(1-carboxyvinyl)-alpha-D-glucosamine + NADPH + H(+). Its pathway is cell wall biogenesis; peptidoglycan biosynthesis. Functionally, cell wall formation. This Coxiella burnetii (strain Dugway 5J108-111) protein is UDP-N-acetylenolpyruvoylglucosamine reductase.